The primary structure comprises 83 residues: Cytochrome c oxidase subunit 7A2, mitochondrial (83 aa).

Residues 1 to 23 (MLRNLLALRQIAQRTISTTSRRH) constitute a mitochondrion transit peptide. Residues 24 to 48 (FENKVPEKQKLFQEDNGMPVHLKGG) lie on the Mitochondrial matrix side of the membrane. The residue at position 33 (Lys-33) is an N6-acetyllysine. Residues 49–77 (ASDALLYRATMALTLGGTAYAIYLLAMAA) traverse the membrane as a helical segment. Over 78 to 83 (FPKKQN) the chain is Mitochondrial intermembrane.

This sequence belongs to the cytochrome c oxidase VIIa family. In terms of assembly, component of the cytochrome c oxidase (complex IV, CIV), a multisubunit enzyme composed of 14 subunits. The complex is composed of a catalytic core of 3 subunits MT-CO1, MT-CO2 and MT-CO3, encoded in the mitochondrial DNA, and 11 supernumerary subunits COX4I, COX5A, COX5B, COX6A, COX6B, COX6C, COX7A, COX7B, COX7C, COX8 and NDUFA4, which are encoded in the nuclear genome. The complex exists as a monomer or a dimer and forms supercomplexes (SCs) in the inner mitochondrial membrane with NADH-ubiquinone oxidoreductase (complex I, CI) and ubiquinol-cytochrome c oxidoreductase (cytochrome b-c1 complex, complex III, CIII), resulting in different assemblies (supercomplex SCI(1)III(2)IV(1) and megacomplex MCI(2)III(2)IV(2)). Interacts with PET100.

It localises to the mitochondrion inner membrane. Its pathway is energy metabolism; oxidative phosphorylation. Its function is as follows. Component of the cytochrome c oxidase, the last enzyme in the mitochondrial electron transport chain which drives oxidative phosphorylation. The respiratory chain contains 3 multisubunit complexes succinate dehydrogenase (complex II, CII), ubiquinol-cytochrome c oxidoreductase (cytochrome b-c1 complex, complex III, CIII) and cytochrome c oxidase (complex IV, CIV), that cooperate to transfer electrons derived from NADH and succinate to molecular oxygen, creating an electrochemical gradient over the inner membrane that drives transmembrane transport and the ATP synthase. Cytochrome c oxidase is the component of the respiratory chain that catalyzes the reduction of oxygen to water. Electrons originating from reduced cytochrome c in the intermembrane space (IMS) are transferred via the dinuclear copper A center (CU(A)) of subunit 2 and heme A of subunit 1 to the active site in subunit 1, a binuclear center (BNC) formed by heme A3 and copper B (CU(B)). The BNC reduces molecular oxygen to 2 water molecules using 4 electrons from cytochrome c in the IMS and 4 protons from the mitochondrial matrix. In Mus musculus (Mouse), this protein is Cytochrome c oxidase subunit 7A2, mitochondrial (Cox7a2).